The chain runs to 410 residues: UPF0761 membrane protein Csal_1895 (410 aa).

Transmembrane regions (helical) follow at residues 43 to 63 (LFAV…IPSF), 99 to 119 (SLTL…MVTV), 139 to 159 (FLLY…GFLL), 180 to 200 (VAFL…FIYM), 212 to 232 (AVAG…AFSL), and 247 to 267 (FAAV…VLVG).

The protein belongs to the UPF0761 family.

It localises to the cell inner membrane. The sequence is that of UPF0761 membrane protein Csal_1895 from Chromohalobacter salexigens (strain ATCC BAA-138 / DSM 3043 / CIP 106854 / NCIMB 13768 / 1H11).